The primary structure comprises 1328 residues: Tubulin polyglutamylase TTLL5 (1328 aa).

Residues M1–A22 form a disordered region. In terms of domain architecture, TTL spans R62–S407. Residues K180, R186–G187, S208–I211, and K221–D223 each bind ATP. Residue R186 coordinates a protein. Position 247 (R247) interacts with L-glutamate. T268–N269 contributes to the ATP binding site. Positions 270, 271, and 293 each coordinate L-glutamate. Positions 353, 366, and 368 each coordinate Mg(2+). The tract at residues P378 to T488 is c-MTBD region. K384 lines the L-glutamate pocket. Disordered stretches follow at residues I411 to D436, A585 to Y631, H834 to H853, P948 to L975, S1006 to D1032, R1085 to G1129, and R1212 to G1271. The span at R420 to L432 shows a compositional bias: polar residues. Acidic residues predominate over residues E597 to Q617. Positions S838–S847 are enriched in low complexity. Composition is skewed to polar residues over residues T1116–T1128, S1214–P1227, P1234–K1248, and Q1257–G1271.

The protein belongs to the tubulin--tyrosine ligase family. In terms of assembly, interacts with the transcriptional coactivators NCOA1/SRC-1 and NCOA2/TIF2. It depends on Mg(2+) as a cofactor. In terms of tissue distribution, highly expressed in brain, kidney, liver, spleen and testis. Expressed in heart, lung, muscle and trachea.

Its subcellular location is the cell projection. The protein resides in the cilium. It localises to the cytoplasm. It is found in the cytoskeleton. The protein localises to the cilium basal body. Its subcellular location is the nucleus. The catalysed reaction is L-glutamyl-[protein] + L-glutamate + ATP = gamma-L-glutamyl-L-glutamyl-[protein] + ADP + phosphate + H(+). It catalyses the reaction (L-glutamyl)(n)-gamma-L-glutamyl-L-glutamyl-[protein] + L-glutamate + ATP = (L-glutamyl)(n+1)-gamma-L-glutamyl-L-glutamyl-[protein] + ADP + phosphate + H(+). In terms of biological role, polyglutamylase which modifies tubulin, generating polyglutamate side chains on the gamma-carboxyl group of specific glutamate residues within the C-terminal tail of tubulin. Preferentially mediates ATP-dependent initiation step of the polyglutamylation reaction over the elongation step. Preferentially modifies the alpha-tubulin tail over a beta-tail. Required for CCSAP localization to both polyglutamylated spindle and cilia microtubules. Increases the effects of transcriptional coactivator NCOA2/TIF2 in glucocorticoid receptor-mediated repression and induction and in androgen receptor-mediated induction. This chain is Tubulin polyglutamylase TTLL5, found in Mus musculus (Mouse).